The sequence spans 421 residues: UDP-N-acetylglucosamine 1-carboxyvinyltransferase (421 aa).

22–23 (KN) provides a ligand contact to phosphoenolpyruvate. Arg-94 contacts UDP-N-acetyl-alpha-D-glucosamine. Catalysis depends on Cys-118, which acts as the Proton donor. Cys-118 carries the 2-(S-cysteinyl)pyruvic acid O-phosphothioketal modification. Residues 163 to 166 (KVSV), Asp-308, and Ile-330 contribute to the UDP-N-acetyl-alpha-D-glucosamine site.

The protein belongs to the EPSP synthase family. MurA subfamily.

It localises to the cytoplasm. The enzyme catalyses phosphoenolpyruvate + UDP-N-acetyl-alpha-D-glucosamine = UDP-N-acetyl-3-O-(1-carboxyvinyl)-alpha-D-glucosamine + phosphate. It participates in cell wall biogenesis; peptidoglycan biosynthesis. Cell wall formation. Adds enolpyruvyl to UDP-N-acetylglucosamine. The chain is UDP-N-acetylglucosamine 1-carboxyvinyltransferase from Orientia tsutsugamushi (strain Ikeda) (Rickettsia tsutsugamushi).